Here is a 247-residue protein sequence, read N- to C-terminus: MKMANPKYKRILIKLSGEALAGERGVGIDIQTVQTIAKEIQEVHSLGIEIALVIGGGNLWRGEPAAEAGMDRVQADYTGMLGTVMNALVMADSLQQVGVDTRVQTAIAMQQVAEPYVRGRALRHLEKGRIVIFGAGIGSPYFSTDTTAALRAAEIEADAILMAKNGVDGVYNADPKKDKTAVKFEELTHRDVINKGLRIMDSTASTLSMDNDIDLVVFNMNQPGNIKRVVFGENIGTTVSNNIEEKE.

14–17 (KLSG) is an ATP binding site. Positions 22–27 (GERGVG) are involved in allosteric activation by GTP. Residue glycine 56 coordinates UMP. Residues glycine 57 and arginine 61 each coordinate ATP. UMP-binding positions include aspartate 76 and 137 to 144 (IGSPYFST). The ATP site is built by asparagine 165, tyrosine 171, and aspartate 174.

This sequence belongs to the UMP kinase family. Homohexamer.

The protein resides in the cytoplasm. It carries out the reaction UMP + ATP = UDP + ADP. The protein operates within pyrimidine metabolism; CTP biosynthesis via de novo pathway; UDP from UMP (UMPK route): step 1/1. Its activity is regulated as follows. Allosterically activated by GTP. Inhibited by UTP, 5-bromo-UTP and 5-iodo-UTP. In terms of biological role, catalyzes the reversible phosphorylation of UMP to UDP, with ATP as the most efficient phosphate donor. In Streptococcus pneumoniae serotype 4 (strain ATCC BAA-334 / TIGR4), this protein is Uridylate kinase (pyrH).